The primary structure comprises 1502 residues: Ras guanine nucleotide exchange factor P (1502 aa).

A Calponin-homology (CH) domain is found at 84–187 (FIIDNQVLDW…LLYSLMKFSE (104 aa)). Disordered stretches follow at residues 216-242 (AQSS…SSNE), 325-436 (QQQQ…PNNN), 456-534 (EDNT…VGRG), and 589-935 (TTTA…NQNN). 4 stretches are compositionally biased toward low complexity: residues 218–242 (SSSS…SSNE), 325–345 (QQQQ…TTTT), 371–400 (TTSS…LLNH), and 407–421 (SSST…PIST). A coiled-coil region spans residues 287–328 (QQQQQQQQQQQQQQQQQQQQQQQQQQQQQQQQQQQQQQQQQQ). Over residues 422–436 (PSTSKSNSFQKPNNN) the composition is skewed to polar residues. Residues 451–515 (EENEIEDNTN…NQNENEDEVK (65 aa)) are a coiled coil. Low complexity predominate over residues 458–508 (NTNNNNNNNNNNNNNNNNNNNNNNNNNNNNNNNNTNDNINNNNKNNNNNQN). Pro residues predominate over residues 518–528 (HSPPKVRPPLP). 5 stretches are compositionally biased toward low complexity: residues 589–646 (TTTA…NNNN), 663–675 (TIST…TGTI), 686–719 (SQPL…LSLP), 764–790 (NSIN…VSQS), and 813–853 (NSNS…NNNN). A compositionally biased stretch (polar residues) spans 861–876 (LTMSNQSANSLKSSGN). Residues 883–935 (TNGNNNISQNQNQNQNQNQNQTQNQNQNQNQNHISHSNSISSGNLNNHVNQNN) show a composition bias toward low complexity. Residues 1032–1076 (VEENKNLITRTEEMQKMIDSLMKEKKELINEKNTLASMLAKTKQQ) are a coiled coil. The N-terminal Ras-GEF domain maps to 1102 to 1249 (GKYEIKGGTT…SELKLVFSTP (148 aa)). The Ras-GEF domain occupies 1267 to 1498 (DPAEIARQLT…FNLSLICEPR (232 aa)).

Its function is as follows. Promotes the exchange of Ras-bound GDP by GTP. The polypeptide is Ras guanine nucleotide exchange factor P (gefP) (Dictyostelium discoideum (Social amoeba)).